The chain runs to 457 residues: tRNA modification GTPase MnmE (457 aa).

3 residues coordinate (6S)-5-formyl-5,6,7,8-tetrahydrofolate: Arg-22, Glu-83, and Arg-122. The 160-residue stretch at 219 to 378 (GLATAIIGRP…LEEAIKTLFF (160 aa)) folds into the TrmE-type G domain. Asn-229 contributes to the K(+) binding site. Residues 229 to 234 (NVGKSS), 248 to 254 (TDIAGTT), and 273 to 276 (DTAG) contribute to the GTP site. A Mg(2+)-binding site is contributed by Ser-233. Thr-248, Ile-250, and Thr-253 together coordinate K(+). Mg(2+) is bound at residue Thr-254. Lys-457 is a binding site for (6S)-5-formyl-5,6,7,8-tetrahydrofolate.

The protein belongs to the TRAFAC class TrmE-Era-EngA-EngB-Septin-like GTPase superfamily. TrmE GTPase family. As to quaternary structure, homodimer. Heterotetramer of two MnmE and two MnmG subunits. Requires K(+) as cofactor.

The protein localises to the cytoplasm. Exhibits a very high intrinsic GTPase hydrolysis rate. Involved in the addition of a carboxymethylaminomethyl (cmnm) group at the wobble position (U34) of certain tRNAs, forming tRNA-cmnm(5)s(2)U34. This Listeria welshimeri serovar 6b (strain ATCC 35897 / DSM 20650 / CCUG 15529 / CIP 8149 / NCTC 11857 / SLCC 5334 / V8) protein is tRNA modification GTPase MnmE.